Here is a 329-residue protein sequence, read N- to C-terminus: L-carnitine dehydrogenase (329 aa).

NAD(+) is bound at residue 19-24 (GAGVIG).

The protein belongs to the 3-hydroxyacyl-CoA dehydrogenase family. L-carnitine dehydrogenase subfamily. In terms of assembly, homodimer.

The protein localises to the cytoplasm. The enzyme catalyses carnitine + NAD(+) = 3-dehydrocarnitine + NADH + H(+). It functions in the pathway amine and polyamine metabolism; carnitine metabolism. Catalyzes the NAD(+)-dependent oxidation of L-carnitine to 3-dehydrocarnitine. The polypeptide is L-carnitine dehydrogenase (Nocardiopsis dassonvillei (strain ATCC 23218 / DSM 43111 / CIP 107115 / JCM 7437 / KCTC 9190 / NBRC 14626 / NCTC 10488 / NRRL B-5397 / IMRU 509) (Actinomadura dassonvillei)).